We begin with the raw amino-acid sequence, 488 residues long: Galactose-1-phosphate uridylyltransferase (488 aa).

Belongs to the galactose-1-phosphate uridylyltransferase type 2 family.

It is found in the cytoplasm. The enzyme catalyses alpha-D-galactose 1-phosphate + UDP-alpha-D-glucose = alpha-D-glucose 1-phosphate + UDP-alpha-D-galactose. The protein operates within carbohydrate metabolism; galactose metabolism. This is Galactose-1-phosphate uridylyltransferase (galT) from Lactobacillus helveticus (Lactobacillus suntoryeus).